The sequence spans 232 residues: Ribonuclease 3 (232 aa).

The region spanning 10–135 (ALKIYEATGY…LIGAMYMDGG (126 aa)) is the RNase III domain. E48 is a binding site for Mg(2+). Residue D52 is part of the active site. Mg(2+) is bound by residues N121 and E124. The active site involves E124. A DRBM domain is found at 161–230 (DPKTALQEWV…AKLMLKKITE (70 aa)).

The protein belongs to the ribonuclease III family. As to quaternary structure, homodimer. Mg(2+) serves as cofactor.

The protein localises to the cytoplasm. The enzyme catalyses Endonucleolytic cleavage to 5'-phosphomonoester.. In terms of biological role, digests double-stranded RNA. Involved in the processing of primary rRNA transcript to yield the immediate precursors to the large and small rRNAs (23S and 16S). Processes some mRNAs, and tRNAs when they are encoded in the rRNA operon. Processes pre-crRNA and tracrRNA of type II CRISPR loci if present in the organism. The chain is Ribonuclease 3 from Anaplasma marginale (strain Florida).